The chain runs to 95 residues: Aspartyl/glutamyl-tRNA(Asn/Gln) amidotransferase subunit C (95 aa).

Belongs to the GatC family. Heterotrimer of A, B and C subunits.

It carries out the reaction L-glutamyl-tRNA(Gln) + L-glutamine + ATP + H2O = L-glutaminyl-tRNA(Gln) + L-glutamate + ADP + phosphate + H(+). The catalysed reaction is L-aspartyl-tRNA(Asn) + L-glutamine + ATP + H2O = L-asparaginyl-tRNA(Asn) + L-glutamate + ADP + phosphate + 2 H(+). Its function is as follows. Allows the formation of correctly charged Asn-tRNA(Asn) or Gln-tRNA(Gln) through the transamidation of misacylated Asp-tRNA(Asn) or Glu-tRNA(Gln) in organisms which lack either or both of asparaginyl-tRNA or glutaminyl-tRNA synthetases. The reaction takes place in the presence of glutamine and ATP through an activated phospho-Asp-tRNA(Asn) or phospho-Glu-tRNA(Gln). This chain is Aspartyl/glutamyl-tRNA(Asn/Gln) amidotransferase subunit C, found in Cereibacter sphaeroides (strain ATCC 17025 / ATH 2.4.3) (Rhodobacter sphaeroides).